Consider the following 398-residue polypeptide: 1-deoxy-D-xylulose 5-phosphate reductoisomerase (398 aa).

Positions 10, 11, 12, 13, 38, and 124 each coordinate NADPH. 1-deoxy-D-xylulose 5-phosphate is bound at residue K125. An NADPH-binding site is contributed by E126. D150 lines the Mn(2+) pocket. 1-deoxy-D-xylulose 5-phosphate-binding residues include S151, E152, S176, and H199. E152 provides a ligand contact to Mn(2+). G205 serves as a coordination point for NADPH. Positions 212, 217, 218, and 221 each coordinate 1-deoxy-D-xylulose 5-phosphate. E221 provides a ligand contact to Mn(2+).

The protein belongs to the DXR family. Requires Mg(2+) as cofactor. Mn(2+) is required as a cofactor.

It carries out the reaction 2-C-methyl-D-erythritol 4-phosphate + NADP(+) = 1-deoxy-D-xylulose 5-phosphate + NADPH + H(+). It participates in isoprenoid biosynthesis; isopentenyl diphosphate biosynthesis via DXP pathway; isopentenyl diphosphate from 1-deoxy-D-xylulose 5-phosphate: step 1/6. In terms of biological role, catalyzes the NADPH-dependent rearrangement and reduction of 1-deoxy-D-xylulose-5-phosphate (DXP) to 2-C-methyl-D-erythritol 4-phosphate (MEP). This is 1-deoxy-D-xylulose 5-phosphate reductoisomerase from Rippkaea orientalis (strain PCC 8801 / RF-1) (Cyanothece sp. (strain PCC 8801)).